A 316-amino-acid polypeptide reads, in one-letter code: Transaldolase (316 aa).

The active-site Schiff-base intermediate with substrate is lysine 125.

This sequence belongs to the transaldolase family. Type 1 subfamily. As to quaternary structure, homodimer.

Its subcellular location is the cytoplasm. The enzyme catalyses D-sedoheptulose 7-phosphate + D-glyceraldehyde 3-phosphate = D-erythrose 4-phosphate + beta-D-fructose 6-phosphate. Its pathway is carbohydrate degradation; pentose phosphate pathway; D-glyceraldehyde 3-phosphate and beta-D-fructose 6-phosphate from D-ribose 5-phosphate and D-xylulose 5-phosphate (non-oxidative stage): step 2/3. Functionally, transaldolase is important for the balance of metabolites in the pentose-phosphate pathway. The protein is Transaldolase of Verminephrobacter eiseniae (strain EF01-2).